Reading from the N-terminus, the 482-residue chain is tRNA sulfurtransferase (482 aa).

In terms of domain architecture, THUMP spans Leu-61 to Arg-165. Residues Leu-183 to Ile-184, Lys-265, Gly-287, and Gln-296 each bind ATP. An intrachain disulfide couples Cys-344 to Cys-456. Positions Phe-404–Pro-482 constitute a Rhodanese domain. Catalysis depends on Cys-456, which acts as the Cysteine persulfide intermediate.

It belongs to the ThiI family.

The protein resides in the cytoplasm. It carries out the reaction [ThiI sulfur-carrier protein]-S-sulfanyl-L-cysteine + a uridine in tRNA + 2 reduced [2Fe-2S]-[ferredoxin] + ATP + H(+) = [ThiI sulfur-carrier protein]-L-cysteine + a 4-thiouridine in tRNA + 2 oxidized [2Fe-2S]-[ferredoxin] + AMP + diphosphate. It catalyses the reaction [ThiS sulfur-carrier protein]-C-terminal Gly-Gly-AMP + S-sulfanyl-L-cysteinyl-[cysteine desulfurase] + AH2 = [ThiS sulfur-carrier protein]-C-terminal-Gly-aminoethanethioate + L-cysteinyl-[cysteine desulfurase] + A + AMP + 2 H(+). The protein operates within cofactor biosynthesis; thiamine diphosphate biosynthesis. In terms of biological role, catalyzes the ATP-dependent transfer of a sulfur to tRNA to produce 4-thiouridine in position 8 of tRNAs, which functions as a near-UV photosensor. Also catalyzes the transfer of sulfur to the sulfur carrier protein ThiS, forming ThiS-thiocarboxylate. This is a step in the synthesis of thiazole, in the thiamine biosynthesis pathway. The sulfur is donated as persulfide by IscS. The chain is tRNA sulfurtransferase from Salmonella arizonae (strain ATCC BAA-731 / CDC346-86 / RSK2980).